Consider the following 792-residue polypeptide: Probable exo-1,4-beta-xylosidase xlnD (792 aa).

The N-terminal stretch at 1 to 20 is a signal peptide; the sequence is MSVAKSIAAVLVALLPGALA. Residues N23, N87, N118, N142, and N246 are each glycosylated (N-linked (GlcNAc...) asparagine). D310 is an active-site residue. N-linked (GlcNAc...) asparagine glycosylation is found at N326, N385, N404, N440, N477, N518, N679, and N701.

Belongs to the glycosyl hydrolase 3 family.

Its subcellular location is the secreted. It catalyses the reaction Hydrolysis of (1-&gt;4)-beta-D-xylans, to remove successive D-xylose residues from the non-reducing termini.. It participates in glycan degradation; xylan degradation. Its function is as follows. Xylan 1,4-beta-xylosidase involved in the hydrolysis of xylan, a major structural heterogeneous polysaccharide found in plant biomass representing the second most abundant polysaccharide in the biosphere, after cellulose. The protein is Probable exo-1,4-beta-xylosidase xlnD (xlnD) of Aspergillus fumigatus (strain ATCC MYA-4609 / CBS 101355 / FGSC A1100 / Af293) (Neosartorya fumigata).